A 370-amino-acid chain; its full sequence is 4-hydroxy-3-methylbut-2-en-1-yl diphosphate synthase (flavodoxin) (370 aa).

4 residues coordinate [4Fe-4S] cluster: cysteine 270, cysteine 273, cysteine 305, and glutamate 312.

It belongs to the IspG family. It depends on [4Fe-4S] cluster as a cofactor.

The catalysed reaction is (2E)-4-hydroxy-3-methylbut-2-enyl diphosphate + oxidized [flavodoxin] + H2O + 2 H(+) = 2-C-methyl-D-erythritol 2,4-cyclic diphosphate + reduced [flavodoxin]. The protein operates within isoprenoid biosynthesis; isopentenyl diphosphate biosynthesis via DXP pathway; isopentenyl diphosphate from 1-deoxy-D-xylulose 5-phosphate: step 5/6. In terms of biological role, converts 2C-methyl-D-erythritol 2,4-cyclodiphosphate (ME-2,4cPP) into 1-hydroxy-2-methyl-2-(E)-butenyl 4-diphosphate. This is 4-hydroxy-3-methylbut-2-en-1-yl diphosphate synthase (flavodoxin) from Hamiltonella defensa subsp. Acyrthosiphon pisum (strain 5AT).